A 246-amino-acid polypeptide reads, in one-letter code: Probable transcriptional regulatory protein HAPS_0943 (246 aa).

Belongs to the TACO1 family.

Its subcellular location is the cytoplasm. The sequence is that of Probable transcriptional regulatory protein HAPS_0943 from Glaesserella parasuis serovar 5 (strain SH0165) (Haemophilus parasuis).